The following is a 198-amino-acid chain: TM2 domain-containing protein 2 (198 aa).

An N-terminal signal peptide occupies residues 1–27 (MRWPVPPVGYLLLGGQGLLLTFSLISS). At 28 to 128 (QNQTSPVTYP…FLRGNKPCIK (101 aa)) the chain is on the extracellular side. 3 N-linked (GlcNAc...) asparagine glycosylation sites follow: asparagine 29, asparagine 40, and asparagine 76. The helical transmembrane segment at 129–149 (YTGHYFITTLLYSFFLGCFGV) threads the bilayer. A TM2 domain is found at 131-179 (GHYFITTLLYSFFLGCFGVDRFCLGHTGTAVGKLLTLGGLGIWWFVDLI). Residues 150-166 (DRFCLGHTGTAVGKLLT) lie on the Cytoplasmic side of the membrane. The chain crosses the membrane as a helical span at residues 167-187 (LGGLGIWWFVDLILLITGGLM). Over 188–198 (PSDNSNWCTIY) the chain is Extracellular.

It belongs to the TM2 family.

The protein resides in the membrane. In Xenopus tropicalis (Western clawed frog), this protein is TM2 domain-containing protein 2 (tm2d2).